The primary structure comprises 484 residues: Probable cytosol aminopeptidase (484 aa).

Positions 256 and 261 each coordinate Mn(2+). Lys-268 is a catalytic residue. The Mn(2+) site is built by Asp-279, Asp-338, and Glu-340. Residue Arg-342 is part of the active site.

This sequence belongs to the peptidase M17 family. Requires Mn(2+) as cofactor.

It localises to the cytoplasm. The enzyme catalyses Release of an N-terminal amino acid, Xaa-|-Yaa-, in which Xaa is preferably Leu, but may be other amino acids including Pro although not Arg or Lys, and Yaa may be Pro. Amino acid amides and methyl esters are also readily hydrolyzed, but rates on arylamides are exceedingly low.. It catalyses the reaction Release of an N-terminal amino acid, preferentially leucine, but not glutamic or aspartic acids.. Presumably involved in the processing and regular turnover of intracellular proteins. Catalyzes the removal of unsubstituted N-terminal amino acids from various peptides. This is Probable cytosol aminopeptidase from Methylibium petroleiphilum (strain ATCC BAA-1232 / LMG 22953 / PM1).